Consider the following 469-residue polypeptide: 3-isopropylmalate dehydratase large subunit (469 aa).

The [4Fe-4S] cluster site is built by cysteine 347, cysteine 407, and cysteine 410.

It belongs to the aconitase/IPM isomerase family. LeuC type 1 subfamily. In terms of assembly, heterodimer of LeuC and LeuD. [4Fe-4S] cluster serves as cofactor.

It catalyses the reaction (2R,3S)-3-isopropylmalate = (2S)-2-isopropylmalate. It participates in amino-acid biosynthesis; L-leucine biosynthesis; L-leucine from 3-methyl-2-oxobutanoate: step 2/4. Catalyzes the isomerization between 2-isopropylmalate and 3-isopropylmalate, via the formation of 2-isopropylmaleate. This Proteus mirabilis (strain HI4320) protein is 3-isopropylmalate dehydratase large subunit.